A 440-amino-acid chain; its full sequence is Enolase (440 aa).

Gln168 provides a ligand contact to (2R)-2-phosphoglycerate. Glu210 serves as the catalytic Proton donor. Asp249, Glu300, and Asp326 together coordinate Mg(2+). Residues Lys351, Arg380, Ser381, and Lys402 each coordinate (2R)-2-phosphoglycerate. The Proton acceptor role is filled by Lys351.

The protein belongs to the enolase family. The cofactor is Mg(2+).

The protein resides in the cytoplasm. The protein localises to the secreted. It is found in the cell surface. It carries out the reaction (2R)-2-phosphoglycerate = phosphoenolpyruvate + H2O. Its pathway is carbohydrate degradation; glycolysis; pyruvate from D-glyceraldehyde 3-phosphate: step 4/5. Its function is as follows. Catalyzes the reversible conversion of 2-phosphoglycerate (2-PG) into phosphoenolpyruvate (PEP). It is essential for the degradation of carbohydrates via glycolysis. This is Enolase from Ureaplasma parvum serovar 3 (strain ATCC 27815 / 27 / NCTC 11736).